A 267-amino-acid chain; its full sequence is Putative metal-binding protein TM_0123 (267 aa).

A signal peptide spans 1 to 15; it reads MKKILLLLVLIVAVL. A divalent metal cation is bound by residues H53, H107, and H172.

Belongs to the bacterial solute-binding protein 9 family.

It is found in the periplasm. In terms of biological role, part of an ATP-binding cassette (ABC) transport system involved in metal import. Binds a metal with high affinity and specificity and delivers it to the membrane permease for translocation into the cytoplasm. This chain is Putative metal-binding protein TM_0123, found in Thermotoga maritima (strain ATCC 43589 / DSM 3109 / JCM 10099 / NBRC 100826 / MSB8).